The sequence spans 423 residues: Adenylosuccinate synthetase (423 aa).

Residues 13 to 19 (GDEGKGK) and 41 to 43 (GHT) each bind GTP. Catalysis depends on aspartate 14, which acts as the Proton acceptor. The Mg(2+) site is built by aspartate 14 and glycine 41. IMP-binding positions include 14-17 (DEGK), 39-42 (NAGH), threonine 130, arginine 144, glutamine 223, threonine 238, and arginine 302. The active-site Proton donor is histidine 42. 298–304 (SVTGRKR) contributes to the substrate binding site. GTP-binding positions include arginine 304 and 410 to 412 (SVG).

Belongs to the adenylosuccinate synthetase family. Homodimer. Requires Mg(2+) as cofactor.

Its subcellular location is the cytoplasm. It carries out the reaction IMP + L-aspartate + GTP = N(6)-(1,2-dicarboxyethyl)-AMP + GDP + phosphate + 2 H(+). It functions in the pathway purine metabolism; AMP biosynthesis via de novo pathway; AMP from IMP: step 1/2. Plays an important role in the de novo pathway of purine nucleotide biosynthesis. Catalyzes the first committed step in the biosynthesis of AMP from IMP. This Porphyromonas gingivalis (strain ATCC BAA-308 / W83) protein is Adenylosuccinate synthetase.